Here is a 505-residue protein sequence, read N- to C-terminus: Olfactomedin-4 (505 aa).

An N-terminal signal peptide occupies residues 1 to 18 (MSYSLLFLLALQFCLGSA). Residues Asn64 and Asn128 are each glycosylated (N-linked (GlcNAc...) asparagine). Residues 174–225 (HIIDMLEVEIRNMTLLVEKLESLDQNNVLSIRRQILALKTKLKECEASKSDL) are a coiled coil. One can recognise an Olfactomedin-like domain in the interval 237–499 (SCSHGGVVNI…LLNYDLVFLQ (263 aa)). Residues Cys238 and Cys429 are joined by a disulfide bond.

Homomultimer; disulfide-linked. Interacts with NDUFA13. Interacts with cell surface lectins (locutions ricinus communis agglutinin I, concanavalin A and wheat germ agglutinin) and cadherin. N-glycosylated.

It is found in the secreted. Its subcellular location is the extracellular space. The protein resides in the mitochondrion. Functionally, may promote proliferation of pancreatic cancer cells by favoring the transition from the S to G2/M phase. In myeloid leukemic cell lines, inhibits cell growth and induces cell differentiation and apoptosis. May play a role in the inhibition of EIF4EBP1 phosphorylation/deactivation. Facilitates cell adhesion, most probably through interaction with cell surface lectins and cadherin. The chain is Olfactomedin-4 (Olfm4) from Mus musculus (Mouse).